Reading from the N-terminus, the 344-residue chain is Ferrochelatase (344 aa).

Histidine 214 and glutamate 295 together coordinate Fe cation.

It belongs to the ferrochelatase family.

The protein resides in the cytoplasm. The enzyme catalyses heme b + 2 H(+) = protoporphyrin IX + Fe(2+). The protein operates within porphyrin-containing compound metabolism; protoheme biosynthesis; protoheme from protoporphyrin-IX: step 1/1. Catalyzes the ferrous insertion into protoporphyrin IX. The polypeptide is Ferrochelatase (Rhizobium leguminosarum bv. trifolii (strain WSM2304)).